The primary structure comprises 490 residues: Protein OrfX3 (490 aa).

This sequence belongs to the TULIP P47 family. Part of a crude toxin extract that includes BoNTA2/NTNH, P47, OrfX2 and OrfX3; OrfX1 was not detected. In terms of processing, shorter forms of this protein are seen in vivo.

Functionally, part of a botulinum neurotoxin type A2 (BoNT) locus; may be part of a progenitor toxin complex required to protect BoNT during its passage through the host gastrointestinal tract. The protein is Protein OrfX3 (orfX3) of Clostridium botulinum (strain Kyoto / Type A2).